A 214-amino-acid chain; its full sequence is Outer-membrane lipoprotein LolB (214 aa).

A signal peptide spans 1-25 (MNNLKRFTKSIFSCIALSGLLFLGG). Cysteine 26 carries the N-palmitoyl cysteine lipid modification. The S-diacylglycerol cysteine moiety is linked to residue cysteine 26.

It belongs to the LolB family. Monomer.

The protein resides in the cell outer membrane. Its function is as follows. Plays a critical role in the incorporation of lipoproteins in the outer membrane after they are released by the LolA protein. This chain is Outer-membrane lipoprotein LolB, found in Shewanella sp. (strain MR-4).